The primary structure comprises 322 residues: 4-diphosphocytidyl-2-C-methyl-D-erythritol kinase (322 aa).

Lysine 25 is an active-site residue. 110–120 (PVAGGMAGGSA) provides a ligand contact to ATP. Residue aspartate 152 is part of the active site.

It belongs to the GHMP kinase family. IspE subfamily.

It catalyses the reaction 4-CDP-2-C-methyl-D-erythritol + ATP = 4-CDP-2-C-methyl-D-erythritol 2-phosphate + ADP + H(+). Its pathway is isoprenoid biosynthesis; isopentenyl diphosphate biosynthesis via DXP pathway; isopentenyl diphosphate from 1-deoxy-D-xylulose 5-phosphate: step 3/6. Catalyzes the phosphorylation of the position 2 hydroxy group of 4-diphosphocytidyl-2C-methyl-D-erythritol. The polypeptide is 4-diphosphocytidyl-2-C-methyl-D-erythritol kinase (Mycolicibacterium gilvum (strain PYR-GCK) (Mycobacterium gilvum (strain PYR-GCK))).